Here is a 60-residue protein sequence, read N- to C-terminus: Small ribosomal subunit protein bS21 (60 aa).

Residues 38-60 are disordered; it reads KGVKRREKEKAARKRLQKKHRMY.

It belongs to the bacterial ribosomal protein bS21 family.

In Mycoplasmoides gallisepticum (strain R(low / passage 15 / clone 2)) (Mycoplasma gallisepticum), this protein is Small ribosomal subunit protein bS21.